The chain runs to 841 residues: MNPNSKHNTNFTNLLKPSDSDIKQFAAQHICRLTDLLNRYAYEYYTLDAPSVPDAEYDKLFRELEALELNHPELKLPDSPTQRVGGEPLAGFAEVRHEVPMLSLTNAFSPQDENGVFDHAEMYAFDQRVRDGLDGGNPEYVIEPKFDGLAISLLYRDGVLVQAATRGDGTTGEDVTQNIKTVSNIPLRLHGENTPELIEVRGEVLMLKADFVALNKRQAENGQKPFANPRNAAAGSLRQLDSRITAQRKLHFFPYSVARQQDGFVAEEHIQELAYFQALGFSLPNGNFGCFKNIDEVLAFYEHMQQKRPELPYEIDGMVVKVNSLAQQHELGFISRAPRWAVAHKFPAEEALTIVEAIDVQIGRTGAVTPVARLQPVFVGGVTVTNATLHNQDEVSRKDVRVGDTVVVRRAGDVIPEVVRVIFERRPMRETAVAVSDGIGHRQDDLFAETPSANQTQSVPLHKPYRLPTHCPICRSEIEREEGEAVARCSGGMLCQAQRAQGLIHFASRKAMDIDGLGEKQIEQLVAQDLVRHFADLYRLDIPTLQKMKETADKTVAESDQMPSEGSSVGASGKHKKQPVKWAENILAGIEASKTPELARFLFALGIRHVGERTAKTLAQAFGTLERVRRAPEPVLACLPDIGTVVARSIAHFFAQAEQQAMIDELLAAGVAPQTQAVTIPPARHAEPQRWIARLPGFKISENKAQALWELAGKNIEGLQTDKALPTDWQAWRSEPQNAALLENLKTFFAQMPSEDEAAQGSDGINKAVAGKTFVLTGTLPTLKRDQAQSLIEAAGGKVSGSVSKKTDYVVAGEAAGSKLEKANALGVSVLSEAELLTLLG.

Residues 54–58 (DAEYD), 103–104 (SL), and E143 contribute to the NAD(+) site. Residue K145 is the N6-AMP-lysine intermediate of the active site. Positions 166, 203, 321, and 345 each coordinate NAD(+). Residues C471, C474, C489, and C495 each contribute to the Zn(2+) site. Residues 554-575 (KTVAESDQMPSEGSSVGASGKH) form a disordered region. The segment covering 561 to 570 (QMPSEGSSVG) has biased composition (polar residues). The region spanning 764 to 841 (GINKAVAGKT…SEAELLTLLG (78 aa)) is the BRCT domain.

This sequence belongs to the NAD-dependent DNA ligase family. LigA subfamily. The cofactor is Mg(2+). Mn(2+) is required as a cofactor.

It carries out the reaction NAD(+) + (deoxyribonucleotide)n-3'-hydroxyl + 5'-phospho-(deoxyribonucleotide)m = (deoxyribonucleotide)n+m + AMP + beta-nicotinamide D-nucleotide.. Functionally, DNA ligase that catalyzes the formation of phosphodiester linkages between 5'-phosphoryl and 3'-hydroxyl groups in double-stranded DNA using NAD as a coenzyme and as the energy source for the reaction. It is essential for DNA replication and repair of damaged DNA. The sequence is that of DNA ligase from Neisseria meningitidis serogroup C (strain 053442).